The sequence spans 109 residues: uncharacterized protein (109 aa).

It to A.fulgidus AF1885.

This is an uncharacterized protein from Methanocaldococcus jannaschii (strain ATCC 43067 / DSM 2661 / JAL-1 / JCM 10045 / NBRC 100440) (Methanococcus jannaschii).